The chain runs to 171 residues: MIGWLEAMLRVGRKLFVKAETQLYPEEKPKLFPRSRGRIVLTRDPDGQERCVACNLCAAVCPVGCIDLSKAVADDGRWYPEHFRINFARCIFCGFCEEACPTAAIQLTPDFELGEWRRDALVYEKHDLLIAGEGKVRGYRYWSVAGKAIDGKDKGCAENESPPVDLKGLLP.

4Fe-4S ferredoxin-type domains follow at residues I39–A71 and E81–D110. Residues C51, C54, C57, C61, C90, C93, C96, and C100 each coordinate [4Fe-4S] cluster.

It belongs to the complex I 23 kDa subunit family. NDH-1 is composed of 14 different subunits. Subunits NuoA, H, J, K, L, M, N constitute the membrane sector of the complex. [4Fe-4S] cluster is required as a cofactor.

The protein resides in the cell inner membrane. It carries out the reaction a quinone + NADH + 5 H(+)(in) = a quinol + NAD(+) + 4 H(+)(out). Functionally, NDH-1 shuttles electrons from NADH, via FMN and iron-sulfur (Fe-S) centers, to quinones in the respiratory chain. The immediate electron acceptor for the enzyme in this species is believed to be ubiquinone. Couples the redox reaction to proton translocation (for every two electrons transferred, four hydrogen ions are translocated across the cytoplasmic membrane), and thus conserves the redox energy in a proton gradient. The polypeptide is NADH-quinone oxidoreductase subunit I 1 (Rhodopseudomonas palustris (strain HaA2)).